Reading from the N-terminus, the 278-residue chain is Non-homologous end joining protein Ku (278 aa).

Residues 9–172 enclose the Ku domain; the sequence is ISFGLVNIPV…MHFAQELVDV (164 aa). Positions 255-278 are disordered; the sequence is NQTGAGAKKKPAKTAKRGKSRKAA. Residues 261–278 show a composition bias toward basic residues; the sequence is AKKKPAKTAKRGKSRKAA.

Belongs to the prokaryotic Ku family. Homodimer. Interacts with LigD.

Its function is as follows. With LigD forms a non-homologous end joining (NHEJ) DNA repair enzyme, which repairs dsDNA breaks with reduced fidelity. Binds linear dsDNA with 5'- and 3'- overhangs but not closed circular dsDNA nor ssDNA. Recruits and stimulates the ligase activity of LigD. This is Non-homologous end joining protein Ku from Opitutus terrae (strain DSM 11246 / JCM 15787 / PB90-1).